The primary structure comprises 200 residues: Phospholipase A2 inhibitor gamma subunit B (200 aa).

The N-terminal stretch at 1–19 (MKFLLFCCLFGTFLATGMC) is a signal peptide. 8 disulfides stabilise this stretch: Cys22-Cys46, Cys25-Cys32, Cys39-Cys67, Cys73-Cys94, Cys95-Cys100, Cys120-Cys145, Cys138-Cys165, and Cys171-Cys191. Residue Asn31 is glycosylated (N-linked (GlcNAc...) asparagine).

Belongs to the CNF-like-inhibitor family. In terms of assembly, heterodimer of subunit A and subunit B. N-glycosylated. In terms of tissue distribution, expressed by the liver. Not expressed in esophagus, stomach, pancreas, spleen, gall bladder, small intestine, rectum, kidney, trachea, lung, testis and body fat.

The protein localises to the secreted. Functionally, inhibits the enzymatic activity of phospholipase A2 (PA2). The chain is Phospholipase A2 inhibitor gamma subunit B from Elaphe quadrivirgata (Japanese four-lined ratsnake).